A 353-amino-acid polypeptide reads, in one-letter code: MADNQIPSSVADAVLVKSIEMPEGSQKVEELDFNKFKGRPITVDDLLQGMKHMGFQASSMCEAVRIINEMRAYRDPTTSEKTTIFLGYTSNLISSGLRGTLRYLVQHKHVSAIVTTAGGIEEDFIKCLGDTYMSSFSAVGADLRSKGLNRIGNLVVPNSNYCAFEDWVVPILDKMLEEQEASRGTENEINWTPSKVIHRLGKEINDERSVYYWAWKNDIPVFCPALTDGSLGDMLYFHTFKASPKQLRIDIVEDIRKINTIAVRAKRAGMIILGGGIVKHHIANACLMRNGAESAVYINTAQEFDGSDAGARPDEAVSWGKIKVGADAVKVYMEATAAFPFIVANTFAKEDGL.

Residues 90–94, 116–118, Glu122, and Asp228 contribute to the NAD(+) site; these read SNLIS and TAG. Residue 121–122 participates in spermidine binding; it reads EE. Spermidine is bound at residue Asp233. Gly275 lines the NAD(+) pocket. His280 provides a ligand contact to spermidine. Position 300-301 (300-301) interacts with NAD(+); that stretch reads TA. Spermidine-binding positions include 306–308 and 315–321; these read GSD and EAVSWGK. Lys321 serves as the catalytic Nucleophile. An NAD(+)-binding site is contributed by 334 to 335; sequence EA.

This sequence belongs to the deoxyhypusine synthase family. In terms of assembly, homotetramer. Requires NAD(+) as cofactor.

It carries out the reaction [eIF5A protein]-L-lysine + spermidine = [eIF5A protein]-deoxyhypusine + propane-1,3-diamine. It functions in the pathway protein modification; eIF5A hypusination. Its function is as follows. Catalyzes the NAD-dependent oxidative cleavage of spermidine and the subsequent transfer of the butylamine moiety of spermidine to the epsilon-amino group of a specific lysine residue of the eIF-5A precursor protein to form the intermediate deoxyhypusine residue. This chain is Deoxyhypusine synthase (dys-1), found in Neurospora crassa (strain ATCC 24698 / 74-OR23-1A / CBS 708.71 / DSM 1257 / FGSC 987).